The following is a 180-amino-acid chain: Negative modulator of initiation of replication (180 aa).

The interaction with DNA stretch occupies residues 115 to 119; it reads RTRVY.

It belongs to the SeqA family. In terms of assembly, homodimer. Polymerizes to form helical filaments.

Its subcellular location is the cytoplasm. Functionally, negative regulator of replication initiation, which contributes to regulation of DNA replication and ensures that replication initiation occurs exactly once per chromosome per cell cycle. Binds to pairs of hemimethylated GATC sequences in the oriC region, thus preventing assembly of replication proteins and re-initiation at newly replicated origins. Repression is relieved when the region becomes fully methylated. In Aliivibrio fischeri (strain ATCC 700601 / ES114) (Vibrio fischeri), this protein is Negative modulator of initiation of replication.